The chain runs to 206 residues: Large ribosomal subunit protein uL4 (206 aa).

The disordered stretch occupies residues 43 to 78 (ARSGNRKQKDREEVKHTTKKPWRQKGTGRARAGMSS). The segment covering 49-58 (KQKDREEVKH) has biased composition (basic and acidic residues). Basic residues predominate over residues 59–70 (TTKKPWRQKGTG).

The protein belongs to the universal ribosomal protein uL4 family. In terms of assembly, part of the 50S ribosomal subunit.

Functionally, one of the primary rRNA binding proteins, this protein initially binds near the 5'-end of the 23S rRNA. It is important during the early stages of 50S assembly. It makes multiple contacts with different domains of the 23S rRNA in the assembled 50S subunit and ribosome. Its function is as follows. Forms part of the polypeptide exit tunnel. The chain is Large ribosomal subunit protein uL4 from Cupriavidus pinatubonensis (strain JMP 134 / LMG 1197) (Cupriavidus necator (strain JMP 134)).